A 1080-amino-acid chain; its full sequence is ATP-dependent helicase/deoxyribonuclease subunit B (1080 aa).

The protein belongs to the helicase family. AddB/RexB type 2 subfamily. Heterodimer of AddA and RexB. Mg(2+) is required as a cofactor.

In terms of biological role, the heterodimer acts as both an ATP-dependent DNA helicase and an ATP-dependent, dual-direction single-stranded exonuclease. Recognizes the chi site generating a DNA molecule suitable for the initiation of homologous recombination. This subunit has 5' -&gt; 3' nuclease activity but not helicase activity. In Streptococcus mutans serotype c (strain ATCC 700610 / UA159), this protein is ATP-dependent helicase/deoxyribonuclease subunit B.